We begin with the raw amino-acid sequence, 613 residues long: Zinc metalloproteinase-disintegrin-like MTP4 (613 aa).

A signal peptide spans methionine 1–serine 20. Residues isoleucine 21–leucine 191 constitute a propeptide that is removed on maturation. The Peptidase M12B domain occupies lysine 205–proline 401. Residue glutamate 208 participates in Ca(2+) binding. An N-linked (GlcNAc...) asparagine glycan is attached at asparagine 282. A Ca(2+)-binding site is contributed by aspartate 292. 3 disulfide bridges follow: cysteine 316-cysteine 396, cysteine 356-cysteine 380, and cysteine 358-cysteine 363. Residues histidine 341, histidine 345, and histidine 351 each coordinate Zn(2+). 7 residues coordinate Ca(2+): cysteine 396, asparagine 399, asparagine 414, phenylalanine 416, glutamate 418, glutamate 421, and aspartate 424. The region spanning proline 409 to asparagine 495 is the Disintegrin domain. 15 disulfides stabilise this stretch: cysteine 412–cysteine 441, cysteine 423–cysteine 436, cysteine 425–cysteine 431, cysteine 435–cysteine 458, cysteine 449–cysteine 455, cysteine 454–cysteine 480, cysteine 467–cysteine 487, cysteine 474–cysteine 506, cysteine 499–cysteine 511, cysteine 518–cysteine 568, cysteine 533–cysteine 575, cysteine 543–cysteine 577, cysteine 546–cysteine 556, cysteine 563–cysteine 601, and cysteine 595–cysteine 606. Residue asparagine 437 is glycosylated (N-linked (GlcNAc...) asparagine). Residues aspartate 473–aspartate 475 carry the D/ECD-tripeptide motif. Residues aspartate 475, leucine 476, glutamate 478, and aspartate 490 each contribute to the Ca(2+) site. The hypervariable region that may play important roles toward cell migration stretch occupies residues lysine 561 to threonine 574. A glycan (N-linked (GlcNAc...) asparagine) is linked at asparagine 572.

It belongs to the venom metalloproteinase (M12B) family. P-III subfamily. As to quaternary structure, monomer. Zn(2+) serves as cofactor. Expressed by the venom gland.

It localises to the secreted. In terms of biological role, snake venom zinc metalloproteinase that may impair hemostasis in the prey. The sequence is that of Zinc metalloproteinase-disintegrin-like MTP4 from Drysdalia coronoides (White-lipped snake).